The following is a 353-amino-acid chain: Guanine nucleotide-binding protein subunit alpha (353 aa).

The interval 1 to 26 (MGCGMSTEEKEGKARNEEIENQLKRD) is disordered. The N-myristoyl glycine moiety is linked to residue glycine 2. Residue cysteine 3 is the site of S-palmitoyl cysteine attachment. Basic and acidic residues predominate over residues 7–26 (TEEKEGKARNEEIENQLKRD). One can recognise a G-alpha domain in the interval 32 to 353 (NEIKMLLLGA…QENLRLCGLI (322 aa)). The segment at 35–48 (KMLLLGAGESGKST) is G1 motif. Residues glutamate 43, serine 44, glycine 45, lysine 46, serine 47, threonine 48, aspartate 150, leucine 175, threonine 181, glycine 203, asparagine 269, lysine 270, aspartate 272, and alanine 325 each coordinate GTP. Serine 47 is a binding site for Mg(2+). Residues 173 to 181 (DVLRSRVKT) are G2 motif. Position 181 (threonine 181) interacts with Mg(2+). The G3 motif stretch occupies residues 196 to 205 (YRMFDVGGQR). A G4 motif region spans residues 265 to 272 (ILFLNKID). Residues 323 to 328 (TCATDT) form a G5 motif region.

It belongs to the G-alpha family. G(q) subfamily. As to quaternary structure, g proteins are composed of 3 units; alpha, beta and gamma. The alpha chain contains the guanine nucleotide binding site. The cofactor is Mg(2+).

In terms of biological role, guanine nucleotide-binding proteins (G proteins) are involved as modulators or transducers in various transmembrane signaling systems. This chain is Guanine nucleotide-binding protein subunit alpha, found in Cryphonectria parasitica (Chestnut blight fungus).